The following is a 164-amino-acid chain: Ribosome-binding factor A (164 aa).

The protein belongs to the RbfA family. In terms of assembly, monomer. Binds 30S ribosomal subunits, but not 50S ribosomal subunits or 70S ribosomes.

It is found in the cytoplasm. Its function is as follows. One of several proteins that assist in the late maturation steps of the functional core of the 30S ribosomal subunit. Associates with free 30S ribosomal subunits (but not with 30S subunits that are part of 70S ribosomes or polysomes). Required for efficient processing of 16S rRNA. May interact with the 5'-terminal helix region of 16S rRNA. This is Ribosome-binding factor A from Mycobacterium leprae (strain Br4923).